A 365-amino-acid polypeptide reads, in one-letter code: DNA replication and repair protein RecF (365 aa).

Position 30 to 37 (30 to 37 (GANGQGKT)) interacts with ATP.

It belongs to the RecF family.

Its subcellular location is the cytoplasm. The RecF protein is involved in DNA metabolism; it is required for DNA replication and normal SOS inducibility. RecF binds preferentially to single-stranded, linear DNA. It also seems to bind ATP. The protein is DNA replication and repair protein RecF of Geobacter metallireducens (strain ATCC 53774 / DSM 7210 / GS-15).